We begin with the raw amino-acid sequence, 186 residues long: Signal peptidase complex catalytic subunit SEC11 (186 aa).

At 1-20 the chain is on the cytoplasmic side; that stretch reads MDALGLSKLRHLKPRQLLSQ. A helical; Signal-anchor for type II membrane protein membrane pass occupies residues 21–41; that stretch reads VLNFALILSTAFMLWKGLSVA. Residues 42 to 186 lie on the Lumenal side of the membrane; sequence TDSPSPIVVV…MGLLVIVQRE (145 aa). Catalysis depends on charge relay system residues Ser-55, His-102, and Asp-128. Residues 172 to 183 are C-terminal short (CTS) helix; it reads ALLGIMGLLVIV.

Belongs to the peptidase S26B family. Component of the signal peptidase complex (SPC) composed of a catalytic subunit SEC11 and three accessory subunits SPC1, SPC2 and SPC3. The complex induces a local thinning of the ER membrane which is used to measure the length of the signal peptide (SP) h-region of protein substrates. This ensures the selectivity of the complex towards h-regions shorter than 18-20 amino acids. SPC associates with the translocon complex.

The protein resides in the endoplasmic reticulum membrane. The enzyme catalyses Cleavage of hydrophobic, N-terminal signal or leader sequences from secreted and periplasmic proteins.. In terms of biological role, catalytic component of the signal peptidase complex (SPC) which catalyzes the cleavage of N-terminal signal sequences from nascent proteins as they are translocated into the lumen of the endoplasmic reticulum. Specifically cleaves N-terminal signal peptides that contain a hydrophobic alpha-helix (h-region) shorter than 18-20 amino acids. This Tuber melanosporum (strain Mel28) (Perigord black truffle) protein is Signal peptidase complex catalytic subunit SEC11 (SEC11).